The chain runs to 224 residues: Tumor protein D52 (224 aa).

Ser-36 and Ser-40 each carry phosphoserine. The stretch at 62-114 forms a coiled coil; the sequence is AATISATETLSEEEQEELRRELAKVEEEIQTLSQVLAAKEKHLAEIKRKLGIN. A Phosphoserine modification is found at Ser-176. Residues 187-224 are disordered; the sequence is KVGGTKPAGGDFGEVLNSAANASATTTEPLPEKTQESL. Residues 203 to 213 are compositionally biased toward low complexity; sequence NSAANASATTT. A Phosphoserine modification is found at Ser-223.

The protein belongs to the TPD52 family. Forms a homodimer or heterodimer with other members of the family. All isoforms interact with several 14-3-3 proteins. In terms of tissue distribution, isoform 2 is expressed in colon, breast, prostate, pancreas and kidney tumor cell lines. Isoform 2 is expressed at high levels in kidney, prostate, brain, small intestine and pancreas, at moderate levels in placenta and colon, at low levels in lung, liver and heart, and at very low levels in spleen, thymus, peripheral mononuclear blood cells, testis and ovary.

In Homo sapiens (Human), this protein is Tumor protein D52 (TPD52).